Reading from the N-terminus, the 132-residue chain is Small ribosomal subunit protein uS19 (132 aa).

Belongs to the universal ribosomal protein uS19 family.

In terms of biological role, protein S19 forms a complex with S13 that binds strongly to the 16S ribosomal RNA. This Pyrococcus abyssi (strain GE5 / Orsay) protein is Small ribosomal subunit protein uS19 (rps19).